Consider the following 779-residue polypeptide: Vezatin (779 aa).

Transmembrane regions (helical) follow at residues 139–159 (LATP…LLVM) and 162–182 (TWWI…YLVI). Positions 430 to 462 (VRSLQLHLKALLNEVIILEDELEKLVCTKETQE) form a coiled coil. 2 disordered regions span residues 618 to 719 (PVDP…DSLQ) and 757 to 779 (EQTF…IEEK). Over residues 625-634 (ISNSEPSMNS) the composition is skewed to polar residues. The segment covering 638–649 (KVSKNDTEEESN) has biased composition (basic and acidic residues). Over residues 706–719 (GLTTAPPTPRDSLQ) the composition is skewed to polar residues. Residues 770 to 779 (EENKNEIEEK) are compositionally biased toward basic and acidic residues.

It belongs to the vezatin family. As to quaternary structure, interacts with USH2A (via the cytoplasmic region); the interaction associates VEZT with the USH2 complex at the stereocilia base. Interacts with myosin MYO7A and the cadherin-catenins complex.

It localises to the cell membrane. Its subcellular location is the cell projection. The protein localises to the stereocilium membrane. The protein resides in the cell junction. It is found in the adherens junction. It localises to the nucleus. Its subcellular location is the cytoplasmic vesicle. The protein localises to the secretory vesicle. The protein resides in the acrosome. In terms of biological role, plays a pivotal role in the establishment of adherens junctions and their maintenance in adult life. Required for morphogenesis of the preimplantation embryo, and for the implantation process. (Microbial infection) In case of Listeria infection, promotes bacterial internalization by participating in myosin VIIa recruitment to the entry site. The sequence is that of Vezatin (VEZT) from Homo sapiens (Human).